Consider the following 236-residue polypeptide: Phosphoribosylaminoimidazole-succinocarboxamide synthase (236 aa).

Belongs to the SAICAR synthetase family.

The catalysed reaction is 5-amino-1-(5-phospho-D-ribosyl)imidazole-4-carboxylate + L-aspartate + ATP = (2S)-2-[5-amino-1-(5-phospho-beta-D-ribosyl)imidazole-4-carboxamido]succinate + ADP + phosphate + 2 H(+). It functions in the pathway purine metabolism; IMP biosynthesis via de novo pathway; 5-amino-1-(5-phospho-D-ribosyl)imidazole-4-carboxamide from 5-amino-1-(5-phospho-D-ribosyl)imidazole-4-carboxylate: step 1/2. The chain is Phosphoribosylaminoimidazole-succinocarboxamide synthase from Rickettsia felis (strain ATCC VR-1525 / URRWXCal2) (Rickettsia azadi).